The sequence spans 342 residues: MTQKILNPVTGRFVKVDGSTGKKIKTGNIYDVNNILSSKLTKKIFDKIRRNDLAKEERETQQLTKKISKGIFDKIRSENKKYEKNTQKLTKKMVLDIFSKIYKEDSRKSKTQCVVSEKKDNGGVLLTEDLGKIFEKSICMLYDTPYIGPYKYGNEKPMLLKTRLTKLLDFFPELTHTAAGGALHDFTTKNSRYLSAKTSKKKDGKVAPQKIGQPTKKKFLEFFNLPPDTSNDDIKLFIKKNIVRILDEYFKYTFDDTIIYYNEVNNIIMLVKTLKKVKFDPNLIEFGCNKPGKSWKESTILFYNNKRLGEFQIHTSRSCIKFRWFFENILLLFPDNFEVTIL.

It carries out the reaction Endonucleolytic cleavage of DNA to give specific double-stranded fragments with terminal 5'-phosphates.. Its function is as follows. A P subtype restriction enzyme that recognizes the double-stranded sequence 5'-CATG-3' and cleaves after C-1. This Chlorella (PBCV-1) protein is Type II restriction enzyme CviAII (CVIAIIR).